The chain runs to 135 residues: Peptidyl-prolyl cis-trans isomerase FPR2 (135 aa).

Residues Met-1–Ala-17 form the signal peptide. A PPIase FKBP-type domain is found at Gly-43 to Lys-132.

It belongs to the FKBP-type PPIase family. FKBP2 subfamily.

It localises to the endoplasmic reticulum membrane. The catalysed reaction is [protein]-peptidylproline (omega=180) = [protein]-peptidylproline (omega=0). With respect to regulation, inhibited by both FK506 and rapamycin. Binds FK506 with 15-fold lower affinity than FKB1. In terms of biological role, PPIases accelerate the folding of proteins. It catalyzes the cis-trans isomerization of proline imidic peptide bonds in oligopeptides. FKBP-13 may play a role in protein trafficking in the ER. The protein is Peptidyl-prolyl cis-trans isomerase FPR2 (FPR2) of Saccharomyces cerevisiae (strain ATCC 204508 / S288c) (Baker's yeast).